The primary structure comprises 110 residues: UPF0060 membrane protein Pcryo_1341 (110 aa).

4 helical membrane-spanning segments follow: residues 7–27, 33–53, 63–83, and 87–107; these read VGLF…PYLW, SIWL…LLTL, AAYG…VDGI, and TWDI…MFAP.

This sequence belongs to the UPF0060 family.

The protein localises to the cell inner membrane. This is UPF0060 membrane protein Pcryo_1341 from Psychrobacter cryohalolentis (strain ATCC BAA-1226 / DSM 17306 / VKM B-2378 / K5).